A 125-amino-acid polypeptide reads, in one-letter code: Ribosome-binding factor A (125 aa).

Belongs to the RbfA family. Monomer. Binds 30S ribosomal subunits, but not 50S ribosomal subunits or 70S ribosomes.

It is found in the cytoplasm. One of several proteins that assist in the late maturation steps of the functional core of the 30S ribosomal subunit. Associates with free 30S ribosomal subunits (but not with 30S subunits that are part of 70S ribosomes or polysomes). Required for efficient processing of 16S rRNA. May interact with the 5'-terminal helix region of 16S rRNA. This Desulfitobacterium hafniense (strain DSM 10664 / DCB-2) protein is Ribosome-binding factor A.